An 88-amino-acid chain; its full sequence is Large ribosomal subunit protein bL27 (88 aa).

The interval 1–21 (MAHKKGASSSRNGRDSAAQRL) is disordered.

Belongs to the bacterial ribosomal protein bL27 family.

This is Large ribosomal subunit protein bL27 from Mycobacterium marinum (strain ATCC BAA-535 / M).